We begin with the raw amino-acid sequence, 123 residues long: Thioredoxin domain-containing protein 17 (123 aa).

Ala2 is modified (N-acetylalanine). Residues Ser41 to Asp123 form the Thioredoxin domain. Active-site nucleophile residues include Cys43 and Cys46. A disulfide bridge connects residues Cys43 and Cys46.

This sequence belongs to the thioredoxin family. In terms of assembly, interacts with TRXR1 and DYNLL1/DNCL1. The oxidized protein is reduced by TRXR1.

The protein resides in the cytoplasm. In terms of biological role, disulfide reductase. May participate in various redox reactions through the reversible oxidation of its active center dithiol to a disulfide and catalyze dithiol-disulfide exchange reactions. Modulates TNF-alpha signaling and NF-kappa-B activation. Has peroxidase activity and may contribute to the elimination of cellular hydrogen peroxide. The protein is Thioredoxin domain-containing protein 17 (Txndc17) of Mus musculus (Mouse).